Consider the following 211-residue polypeptide: Ubiquitin-conjugating enzyme E2 S-C (211 aa).

Positions 11–157 constitute a UBC core domain; sequence HIIRRVYKEV…AKLMTEIHAQ (147 aa). The active-site Glycyl thioester intermediate is Cys-95. The segment at 158–211 is disordered; it reads GSTLRGKDPTDPCSSASATVVSGDGPMAKKHAGDRDKKLAAKKKTDKKRALRRL. Over residues 197–211 the composition is skewed to basic residues; sequence AAKKKTDKKRALRRL.

This sequence belongs to the ubiquitin-conjugating enzyme family.

It carries out the reaction S-ubiquitinyl-[E1 ubiquitin-activating enzyme]-L-cysteine + [E2 ubiquitin-conjugating enzyme]-L-cysteine = [E1 ubiquitin-activating enzyme]-L-cysteine + S-ubiquitinyl-[E2 ubiquitin-conjugating enzyme]-L-cysteine.. The protein operates within protein modification; protein ubiquitination. Its function is as follows. Catalyzes the covalent attachment of ubiquitin to other proteins. Acts as an essential factor of the anaphase promoting complex/cyclosome (APC/C), a cell cycle-regulated ubiquitin ligase that controls progression through mitosis. Acts by specifically elongating 'Lys-11'-linked polyubiquitin chains initiated by the E2 enzyme ube2c/ubch10 on APC/C substrates, enhancing the degradation of APC/C substrates by the proteasome and promoting mitotic exit. In Xenopus laevis (African clawed frog), this protein is Ubiquitin-conjugating enzyme E2 S-C (ube2s-c).